Consider the following 91-residue polypeptide: Large ribosomal subunit protein bL27 (91 aa).

Residues 1-22 form a disordered region; that stretch reads MAHKKAGGSSRNGRDSDGRRLG.

It belongs to the bacterial ribosomal protein bL27 family.

In Beijerinckia indica subsp. indica (strain ATCC 9039 / DSM 1715 / NCIMB 8712), this protein is Large ribosomal subunit protein bL27.